The sequence spans 689 residues: Elongation factor G (689 aa).

The tr-type G domain occupies 9 to 283 (AKFRNIGIMA…AIIEFMPSPL (275 aa)). Residues 18–25 (AHIDAGKT), 82–86 (DTPGH), and 136–139 (NKMD) contribute to the GTP site.

The protein belongs to the TRAFAC class translation factor GTPase superfamily. Classic translation factor GTPase family. EF-G/EF-2 subfamily.

The protein resides in the cytoplasm. Functionally, catalyzes the GTP-dependent ribosomal translocation step during translation elongation. During this step, the ribosome changes from the pre-translocational (PRE) to the post-translocational (POST) state as the newly formed A-site-bound peptidyl-tRNA and P-site-bound deacylated tRNA move to the P and E sites, respectively. Catalyzes the coordinated movement of the two tRNA molecules, the mRNA and conformational changes in the ribosome. The protein is Elongation factor G of Clostridium botulinum (strain ATCC 19397 / Type A).